The chain runs to 102 residues: Small ribosomal subunit protein uS10m (102 aa).

This sequence belongs to the universal ribosomal protein uS10 family.

The protein localises to the mitochondrion. This Marchantia polymorpha (Common liverwort) protein is Small ribosomal subunit protein uS10m (RPS10).